The following is a 100-amino-acid chain: Urease subunit gamma (100 aa).

It belongs to the urease gamma subunit family. Heterotrimer of UreA (gamma), UreB (beta) and UreC (alpha) subunits. Three heterotrimers associate to form the active enzyme.

It localises to the cytoplasm. The catalysed reaction is urea + 2 H2O + H(+) = hydrogencarbonate + 2 NH4(+). It participates in nitrogen metabolism; urea degradation; CO(2) and NH(3) from urea (urease route): step 1/1. The chain is Urease subunit gamma from Nostoc sp. (strain PCC 7120 / SAG 25.82 / UTEX 2576).